Consider the following 1332-residue polypeptide: Elongator complex protein 1 (1332 aa).

A phosphoserine mark is found at serine 471, serine 804, serine 867, serine 1171, and serine 1174. Positions 885-1332 (VDVNELYDHS…RTQWKLSLLD (448 aa)) are mediates dimerization. Residues 1150 to 1208 (QAGLDDEVPHGQESDLFSETSSVVSGSEMSGKYSHSNSRISARSSKNRRKAERKKHSLK) are disordered. Over residues 1164-1177 (DLFSETSSVVSGSE) the composition is skewed to polar residues. Positions 1191–1209 (ARSSKNRRKAERKKHSLKE) are required for binding to tRNA. Residues 1194–1206 (SKNRRKAERKKHS) are compositionally biased toward basic residues.

This sequence belongs to the ELP1/IKA1 family. As to quaternary structure, homodimer; dimerization promotes ELP1 stability and elongator complex formation. Component of the elongator complex which consists of ELP1, ELP2, ELP3, ELP4, ELP5 and ELP6. Interacts preferentially with MAP3K14/NIK followed by IKK-alpha and IKK-beta.

Its subcellular location is the cytoplasm. It localises to the nucleus. Its pathway is tRNA modification; 5-methoxycarbonylmethyl-2-thiouridine-tRNA biosynthesis. Functionally, component of the elongator complex which is required for multiple tRNA modifications, including mcm5U (5-methoxycarbonylmethyl uridine), mcm5s2U (5-methoxycarbonylmethyl-2-thiouridine), and ncm5U (5-carbamoylmethyl uridine). The elongator complex catalyzes the formation of carboxymethyluridine in the wobble base at position 34 in tRNAs. Regulates the migration and branching of projection neurons in the developing cerebral cortex, through a process depending on alpha-tubulin acetylation. ELP1 binds to tRNA, mediating interaction of the elongator complex with tRNA. May act as a scaffold protein that assembles active IKK-MAP3K14 complexes (IKKA, IKKB and MAP3K14/NIK). This Homo sapiens (Human) protein is Elongator complex protein 1.